The following is a 486-amino-acid chain: Probable glycine dehydrogenase (decarboxylating) subunit 2 (486 aa).

N6-(pyridoxal phosphate)lysine is present on Lys273.

This sequence belongs to the GcvP family. C-terminal subunit subfamily. The glycine cleavage system is composed of four proteins: P, T, L and H. In this organism, the P 'protein' is a heterodimer of two subunits. Pyridoxal 5'-phosphate serves as cofactor.

It catalyses the reaction N(6)-[(R)-lipoyl]-L-lysyl-[glycine-cleavage complex H protein] + glycine + H(+) = N(6)-[(R)-S(8)-aminomethyldihydrolipoyl]-L-lysyl-[glycine-cleavage complex H protein] + CO2. Its function is as follows. The glycine cleavage system catalyzes the degradation of glycine. The P protein binds the alpha-amino group of glycine through its pyridoxal phosphate cofactor; CO(2) is released and the remaining methylamine moiety is then transferred to the lipoamide cofactor of the H protein. This is Probable glycine dehydrogenase (decarboxylating) subunit 2 from Alkaliphilus oremlandii (strain OhILAs) (Clostridium oremlandii (strain OhILAs)).